The following is a 368-amino-acid chain: Histidinol-phosphate aminotransferase (368 aa).

At lysine 215 the chain carries N6-(pyridoxal phosphate)lysine.

It belongs to the class-II pyridoxal-phosphate-dependent aminotransferase family. Histidinol-phosphate aminotransferase subfamily. Homodimer. It depends on pyridoxal 5'-phosphate as a cofactor.

It carries out the reaction L-histidinol phosphate + 2-oxoglutarate = 3-(imidazol-4-yl)-2-oxopropyl phosphate + L-glutamate. It functions in the pathway amino-acid biosynthesis; L-histidine biosynthesis; L-histidine from 5-phospho-alpha-D-ribose 1-diphosphate: step 7/9. The polypeptide is Histidinol-phosphate aminotransferase (hisC) (Buchnera aphidicola subsp. Acyrthosiphon pisum (strain APS) (Acyrthosiphon pisum symbiotic bacterium)).